The primary structure comprises 185 residues: Elongation factor P (185 aa).

Belongs to the elongation factor P family.

Its subcellular location is the cytoplasm. It participates in protein biosynthesis; polypeptide chain elongation. Its function is as follows. Involved in peptide bond synthesis. Stimulates efficient translation and peptide-bond synthesis on native or reconstituted 70S ribosomes in vitro. Probably functions indirectly by altering the affinity of the ribosome for aminoacyl-tRNA, thus increasing their reactivity as acceptors for peptidyl transferase. The sequence is that of Elongation factor P from Salinispora tropica (strain ATCC BAA-916 / DSM 44818 / JCM 13857 / NBRC 105044 / CNB-440).